The chain runs to 184 residues: NADH-quinone oxidoreductase subunit J (184 aa).

Residues 1–21 (MEFAFYICGLIAILATLRVIT) traverse the membrane as a helical segment. The Cytoplasmic segment spans residues 22–27 (HTNPVH). Residues 28 to 48 (ALLYLIISLLAISGVFFSLGA) form a helical membrane-spanning segment. Residues 49-53 (YFAGA) lie on the Periplasmic side of the membrane. Residues 54-74 (LEIIVYAGAIMVLFVFVVMML) form a helical membrane-spanning segment. Residues 75 to 91 (NLGGSEIEQERQWLKPQ) are Cytoplasmic-facing. A helical transmembrane segment spans residues 92 to 112 (VWIGPAILSAIMLVVIVYAIL). Residues 113 to 137 (GVNDQGIDGTPISAKAVGITLFGPY) are Periplasmic-facing. The helical transmembrane segment at 138–158 (VLAVELASMLLLAGLVVAFHV) threads the bilayer. Residues 159–184 (GREERAGEVLSNRKDDSAKRKTEEHA) are Cytoplasmic-facing.

The protein belongs to the complex I subunit 6 family. In terms of assembly, composed of 13 different subunits. Subunits NuoA, H, J, K, L, M, N constitute the membrane sector of the complex.

The protein localises to the cell inner membrane. The catalysed reaction is a quinone + NADH + 5 H(+)(in) = a quinol + NAD(+) + 4 H(+)(out). In terms of biological role, NDH-1 shuttles electrons from NADH, via FMN and iron-sulfur (Fe-S) centers, to quinones in the respiratory chain. The immediate electron acceptor for the enzyme in this species is believed to be ubiquinone. Couples the redox reaction to proton translocation (for every two electrons transferred, four hydrogen ions are translocated across the cytoplasmic membrane), and thus conserves the redox energy in a proton gradient. This is NADH-quinone oxidoreductase subunit J (nuoJ) from Escherichia coli O157:H7.